A 176-amino-acid chain; its full sequence is Shikimate kinase (176 aa).

Residue 17–24 participates in ATP binding; sequence GMMGVGKS.

Belongs to the shikimate kinase family.

The protein resides in the cytoplasm. The enzyme catalyses shikimate + ATP = 3-phosphoshikimate + ADP + H(+). The protein operates within metabolic intermediate biosynthesis; chorismate biosynthesis; chorismate from D-erythrose 4-phosphate and phosphoenolpyruvate: step 5/7. In Zymomonas mobilis subsp. mobilis (strain ATCC 31821 / ZM4 / CP4), this protein is Shikimate kinase.